Here is a 703-residue protein sequence, read N- to C-terminus: Putative glycosyl hydrolase ecdE (703 aa).

Residues 1–21 (MKLNIFASAILLCTSAFPVAA) form the signal peptide. Residue D47 is part of the active site. 6 N-linked (GlcNAc...) asparagine glycosylation sites follow: N104, N120, N293, N397, N443, and N641.

It belongs to the glycosyl hydrolase 32 family.

The sequence is that of Putative glycosyl hydrolase ecdE from Aspergillus rugulosus (Emericella rugulosa).